Here is a 220-residue protein sequence, read N- to C-terminus: Artemin (220 aa).

An N-terminal signal peptide occupies residues 1–39 (MELGLGGLSTLSHCPWPRQQPALWPTLAALALLSSVAEA). Residues 40–107 (SLGSAPRSPA…ALPRGGRAAR (68 aa)) constitute a propeptide that is removed on maturation. Residues 41-121 (LGSAPRSPAP…GSRARAAGAR (81 aa)) form a disordered region. 2 stretches are compositionally biased toward pro residues: residues 47 to 58 (SPAPREGPPPVL) and 81 to 98 (PPPQPSRPAPPPPAPPSA). The segment covering 99–121 (LPRGGRAARAGGPGSRARAAGAR) has biased composition (low complexity). 3 cysteine pairs are disulfide-bonded: cysteine 123/cysteine 188, cysteine 150/cysteine 216, and cysteine 154/cysteine 218. A glycan (N-linked (GlcNAc...) asparagine) is linked at asparagine 202.

This sequence belongs to the TGF-beta family. GDNF subfamily. In terms of assembly, homodimer; disulfide-linked. Interacts with GFRA3 coreceptor and RET: forms a 2:2:2 ternary complex composed of ARTN ligand, GFRA3 and RET receptor. As to expression, ubiquitous. Expressed at high levels in peripheral tissues including prostate, placenta, pancreas, heart, kidney, pituitary gland, lung and testis. Expressed at low levels in the brain.

It localises to the secreted. Functionally, growth factor that supports the survival of sensory and sympathetic peripheral neurons in culture and also supports the survival of dopaminergic neurons of the ventral mid-brain. Acts by binding to its coreceptor, GFRA3, leading to autophosphorylation and activation of the RET receptor. Strong attractant of gut hematopoietic cells thus promoting the formation Peyer's patch-like structures, a major component of the gut-associated lymphoid tissue. This is Artemin from Homo sapiens (Human).